A 926-amino-acid chain; its full sequence is Peripheral plasma membrane protein CASK (926 aa).

One can recognise a Protein kinase domain in the interval 12 to 276 (YELCEVIGKG…VYEALNHPWL (265 aa)). Residues 18 to 26 (IGKGPFSVV) and K41 each bind ATP. Position 51 is a phosphoserine (S51). The active site involves D141. Residues S151 and S155 each carry the phosphoserine; by autocatalysis modification. A Phosphothreonine modification is found at T182. The segment at 305–315 (KGAVLAAVSSH) is calmodulin-binding. S313 bears the Phosphoserine mark. L27 domains follow at residues 343-398 (AERA…SPQI) and 402-455 (PSDA…YSDE). Residues 482-909 (MENVTRVRLV…DETIRHLEEA (428 aa)) form a required for interaction with NRXN1 (via C-terminal tail) region. Positions 490-571 (LVQFQKNTDE…SITFKIVPSY (82 aa)) constitute a PDZ domain. Phosphoserine occurs at positions 570 and 571. The segment at 574–610 (QSSSCERDSPSTSRQSPANGHSSTNNSVSDLPSTTQP) is disordered. An SH3 domain is found at 612–682 (GRQIYVRAQF…PSPELQEWRV (71 aa)). Positions 739–911 (RKTLVLLGAH…TIRHLEEAVE (173 aa)) constitute a Guanylate kinase-like domain.

This sequence in the N-terminal section; belongs to the protein kinase superfamily. CAMK Ser/Thr protein kinase family. CaMK subfamily. It belongs to the MAGUK family. As to quaternary structure, CASK and LIN7 form a tripartite complex with CASKIN1. Component of the brain-specific heterotrimeric complex (LIN-10-LIN-2-LIN-7 complex) composed of at least APBA1, CASK, and LIN7, which associates with the motor protein KIF17 to transport vesicles along microtubules. Forms a heterotrimeric complex with DLG1 and LIN7B via their L27 domains. Identified in a complex with ACTN4, IQGAP1, MAGI2, NPHS1, SPTAN1 and SPTBN1. Part of a complex containing CASK, TBR1 and TSPYL2. Interacts with WHRN. Interacts (via the PDZ, SH3 and guanylate kinase-like domains) with NRXN1 (via C-terminus). Interacts with CASKIN1, APBA1, LIN7(A/B/C), and L27 domain of DLG1 and isoform 2 of DLG4. Interacts with FCHSD2. Interacts with KIRREL3. Interacts with TBR1. Interacts with TSPYL2. Unlike other protein kinases, does not require a divalent cation such as magnesium for catalytic activity. is required as a cofactor.

The protein localises to the nucleus. It localises to the cytoplasm. It is found in the cell membrane. The enzyme catalyses L-seryl-[protein] + ATP = O-phospho-L-seryl-[protein] + ADP + H(+). It carries out the reaction L-threonyl-[protein] + ATP = O-phospho-L-threonyl-[protein] + ADP + H(+). Its activity is regulated as follows. Differs from archetypal CaMK members in that the kinase domain exhibits a constitutively active conformation and the autoinhibitory region does not engage in direct contact with the ATP-binding cleft, although it still binds Ca(2+)/CAM. Functionally, multidomain scaffolding Mg(2+)-independent protein kinase that catalyzes the phosphotransfer from ATP to proteins such as NRXN1, and plays a role in synaptic transmembrane protein anchoring and ion channel trafficking. Contributes to neural development and regulation of gene expression via interaction with the transcription factor TBR1. Binds to cell-surface proteins, including amyloid precursor protein, neurexins, and syndecans. May mediate a link between the extracellular matrix and the actin cytoskeleton via its interaction with syndecan and with the actin/spectrin-binding protein 4.1. Component of the LIN-10-LIN-2-LIN-7 complex, which associates with the motor protein KIF17 to transport vesicles containing N-methyl-D-aspartate (NMDA) receptor subunit NR2B along microtubules. This chain is Peripheral plasma membrane protein CASK, found in Mus musculus (Mouse).